A 98-amino-acid chain; its full sequence is Large ribosomal subunit protein uL23 (98 aa).

Belongs to the universal ribosomal protein uL23 family. As to quaternary structure, part of the 50S ribosomal subunit. Contacts protein L29, and trigger factor when it is bound to the ribosome.

Functionally, one of the early assembly proteins it binds 23S rRNA. One of the proteins that surrounds the polypeptide exit tunnel on the outside of the ribosome. Forms the main docking site for trigger factor binding to the ribosome. The polypeptide is Large ribosomal subunit protein uL23 (Hahella chejuensis (strain KCTC 2396)).